Here is a 218-residue protein sequence, read N- to C-terminus: Sodium channel regulatory subunit beta-1 (218 aa).

An N-terminal signal peptide occupies residues M1–W18. The Extracellular portion of the chain corresponds to G19–I157. 2 disulfides stabilise this stretch: C21–C43 and C40–C121. The region spanning V22–A150 is the Ig-like C2-type domain. Residues N93, N110, N114, and N135 are each glycosylated (N-linked (GlcNAc...) asparagine). The chain crosses the membrane as a helical span at residues V158–V179. Topologically, residues Y180–E218 are cytoplasmic.

The protein belongs to the sodium channel auxiliary subunit SCN1B (TC 8.A.17) family. A voltage-gated sodium (Nav) channel consists of an ion-conducting pore-forming alpha subunit functional on its own that is regulated by one or more beta subunits. Interacts with SCN1A; regulatory subunit of SCN1A/Nav1.1. Interacts with SCN3A; regulatory subunit of SCN3A/Nav1.3. Interacts with SCN4A; regulatory subunit of SCN4A/Nav1.4. Interacts with SCN5A; regulatory subunit of SCN5A/Nav1.5. Interacts with SCN8A; regulatory subunit of SCN8A/Nav1.6. Interacts with SCN9A; regulatory subunit of SCN9A/Nav1.7. Interacts with SCN10A; regulatory subunit of SCN10A/Nav1.8. Interacts with NFASC. Interacts with TMEM65.

The protein resides in the cell membrane. The protein localises to the perikaryon. It is found in the cell projection. It localises to the axon. Regulatory subunit of multiple voltage-gated sodium (Nav) channels directly mediating the depolarization of excitable membranes. Navs, also called VGSCs (voltage-gated sodium channels) or VDSCs (voltage-dependent sodium channels), operate by switching between closed and open conformations depending on the voltage difference across the membrane. In the open conformation they allow Na(+) ions to selectively pass through the pore, along their electrochemical gradient. The influx of Na+ ions provokes membrane depolarization, initiating the propagation of electrical signals throughout cells and tissues. The accessory beta subunits participate in localization and functional modulation of the Nav channels. Modulates the activity of SCN1A/Nav1.1, SCN2A/Nav1.2, SCN3A/Nav1.3, SCN4A/Nav1.4, SCN5A/Nav1.5, SCN8A/Nav1.6, SCN9A/Nav1.7 and SCN10A/Nav1.8. The sequence is that of Sodium channel regulatory subunit beta-1 from Bos taurus (Bovine).